A 136-amino-acid chain; its full sequence is Ig heavy chain V-A2 region P-MU-3 (136 aa).

The signal sequence occupies residues 1–19; the sequence is METGLRWLLLVAVLKGVQC. Glutamine 20 is subject to Pyrrolidone carboxylic acid. Residues 20 to 127 enclose the Ig-like domain; the sequence is QSVKESEGGL…ENEFFNAIWG (108 aa).

In Oryctolagus cuniculus (Rabbit), this protein is Ig heavy chain V-A2 region P-MU-3.